Reading from the N-terminus, the 285-residue chain is Acetylglutamate kinase (285 aa).

Residues 69–70, arginine 91, and asparagine 183 contribute to the substrate site; that span reads GG.

The protein belongs to the acetylglutamate kinase family. ArgB subfamily.

The protein localises to the cytoplasm. It carries out the reaction N-acetyl-L-glutamate + ATP = N-acetyl-L-glutamyl 5-phosphate + ADP. It functions in the pathway amino-acid biosynthesis; L-arginine biosynthesis; N(2)-acetyl-L-ornithine from L-glutamate: step 2/4. In terms of biological role, catalyzes the ATP-dependent phosphorylation of N-acetyl-L-glutamate. The polypeptide is Acetylglutamate kinase (Jannaschia sp. (strain CCS1)).